Consider the following 336-residue polypeptide: Cytoplasmic envelopment protein 2 (336 aa).

Residues 67 to 69 (KKK) are interaction with host BBLF1.

It belongs to the herpesviridae cytoplasmic envelopment protein 2 family. In terms of assembly, homodimer. Interacts with BBLF1. Interacts with the capsid. Interacts with BKRF4 (via C-terminus); this interaction is important for infectious virion production. Interacts with host TYK2; this interaction participates to the inhibition of host type I IFN signaling. Interacts with host STAT1; this interaction leads to STAT1 dephosphorylation and inhibition. Interacts with host STAT2; this interaction leads to STAT2 degradation. Interacts with host CUL1; this interaction might facilitate CUL1 recruitment to STAT2, leading to ubiquitination and degradation of the latter. Interacts with host AGO2; this interaction participates to the host miRNA regulation leading to enhanced SUMOylation.

Its subcellular location is the virion tegument. It localises to the host cytoplasm. It is found in the host nucleus. The protein localises to the host Golgi apparatus. The protein resides in the host trans-Golgi network. Plays a critical role in cytoplasmic virus egress. Participates in the final step of tegumentation and envelope acquisition within the host cytoplasm by directly interacting with the capsid. Upon virion binding to target cell, a signaling cascade is triggered to disrupt the interaction with the capsid, thereby preparing capsid uncoating. Activates the AP-1 pathway and enhances EBV reactivation and virus release. Inhibits type I IFN-induced TYK2, STAT1 and STAT3 phosphorylation, thereby impairing type I IFN signaling and counteracting the ability of IFN-alpha to suppress the reactivation of EBV. Recruits SHP1 phosphatase to dephosphorylate STAT1. Mediates STAT2 ubiquitination and proteasomal degradation. Also suppresses type II and type III IFN signaling. Contributes to G1/S arrest in the host cell. Acts as an miRNA regulator that interferes with the function of RISC in miRNA-mediated mRNA silencing. As a result, SUMOylation is increased. When encapsulated in the exosomes released by EBV-infected host cells, may facilitate the infection in recipient cells. This chain is Cytoplasmic envelopment protein 2, found in Epstein-Barr virus (strain AG876) (HHV-4).